A 427-amino-acid chain; its full sequence is Glutamate-1-semialdehyde 2,1-aminomutase (427 aa).

At Lys-265 the chain carries N6-(pyridoxal phosphate)lysine.

It belongs to the class-III pyridoxal-phosphate-dependent aminotransferase family. HemL subfamily. Homodimer. Pyridoxal 5'-phosphate is required as a cofactor.

The protein localises to the cytoplasm. The catalysed reaction is (S)-4-amino-5-oxopentanoate = 5-aminolevulinate. It functions in the pathway porphyrin-containing compound metabolism; protoporphyrin-IX biosynthesis; 5-aminolevulinate from L-glutamyl-tRNA(Glu): step 2/2. In Actinobacillus succinogenes (strain ATCC 55618 / DSM 22257 / CCUG 43843 / 130Z), this protein is Glutamate-1-semialdehyde 2,1-aminomutase.